The following is a 349-amino-acid chain: N-lysine methyltransferase KMT5A (349 aa).

A disordered region spans residues 18-46 (AAVAATAPGPEMVEQRGPGRPRSDGENVF). A Phosphoserine modification is found at serine 57. The interval 65–207 (RSPLQEENSV…SEERKKNELI (143 aa)) is disordered. The segment covering 107-119 (VKSDEQKSKDTRR) has biased composition (basic and acidic residues). Threonine 138 carries the post-translational modification Phosphothreonine. Residues 154–170 (ALKKSLKGKQAPRKKSQ) show a composition bias toward basic residues. The segment covering 192 to 207 (SKAELQSEERKKNELI) has biased composition (basic and acidic residues). The SET domain occupies 213 to 334 (EGMKIDLIDG…AGEELLYDYG (122 aa)). S-adenosyl-L-methionine contacts are provided by residues 223–225 (KGR), tyrosine 268, and 295–296 (NH).

The protein belongs to the class V-like SAM-binding methyltransferase superfamily. Histone-lysine methyltransferase family. PR/SET subfamily. As to quaternary structure, interacts with L3MBTL1. Interacts with SIRT2 (phosphorylated form); the interaction is direct, stimulates KMT5A-mediated methyltransferase activity at histone H4 'Lys-20' (H4K20me1) and is increased in a H(2)O(2)-induced oxidative stress-dependent manner. Post-translationally, ubiquitinated and degraded by the DCX(DTL) complex.

It is found in the nucleus. Its subcellular location is the chromosome. It carries out the reaction L-lysyl(20)-[histone H4] + S-adenosyl-L-methionine = N(6)-methyl-L-lysyl(20)-[histone H4] + S-adenosyl-L-homocysteine + H(+). The enzyme catalyses L-lysyl-[protein] + S-adenosyl-L-methionine = N(6)-methyl-L-lysyl-[protein] + S-adenosyl-L-homocysteine + H(+). Functionally, protein-lysine N-methyltransferase that monomethylates both histones and non-histone proteins. Specifically monomethylates 'Lys-20' of histone H4 (H4K20me1). H4K20me1 is enriched during mitosis and represents a specific tag for epigenetic transcriptional repression. Mainly functions in euchromatin regions, thereby playing a central role in the silencing of euchromatic genes. Required for cell proliferation, probably by contributing to the maintenance of proper higher-order structure of DNA during mitosis. Involved in chromosome condensation and proper cytokinesis. Nucleosomes are preferred as substrate compared to free histones. Mediates monomethylation of p53/TP53 at 'Lys-382', leading to repress p53/TP53-target genes. Plays a negative role in TGF-beta response regulation and a positive role in cell migration. This Mus musculus (Mouse) protein is N-lysine methyltransferase KMT5A.